The sequence spans 627 residues: Polyadenylate-binding protein, cytoplasmic and nuclear (627 aa).

A compositionally biased stretch (polar residues) spans 1-11 (MSAADANQVQE). Residues 1 to 46 (MSAADANQVQESLEKLNLDSAPVASTEETEQTASGETEEAADSAQV) are disordered. 4 RRM domains span residues 51 to 129 (ASLY…WSQR), 139 to 216 (GNIF…KHIS), 232 to 309 (TNVY…RAQK), and 335 to 412 (VNLF…LAQR). Residues 511–535 (DFNNGANGGRQQRGYYPNRNQNQKG) show a composition bias toward low complexity. Residues 511–537 (DFNNGANGGRQQRGYYPNRNQNQKGRQ) are disordered. The region spanning 537–618 (QQKDLAAIIA…ALTAFEEYKK (82 aa)) is the PABC domain.

It belongs to the polyadenylate-binding protein type-1 family.

It is found in the cytoplasm. The protein localises to the nucleus. Functionally, binds the poly(A) tail of mRNA. Appears to be an important mediator of the multiple roles of the poly(A) tail in mRNA biogenesis, stability and translation. In the nucleus, involved in both mRNA cleavage and polyadenylation. Is also required for efficient mRNA export to the cytoplasm. Acts in concert with a poly(A)-specific nuclease (PAN) to affect poly(A) tail shortening, which may occur concomitantly with either nucleocytoplasmic mRNA transport or translational initiation. In the cytoplasm, stimulates translation initiation and regulates mRNA decay through translation termination-coupled poly(A) shortening, probably mediated by PAN. In Debaryomyces hansenii (strain ATCC 36239 / CBS 767 / BCRC 21394 / JCM 1990 / NBRC 0083 / IGC 2968) (Yeast), this protein is Polyadenylate-binding protein, cytoplasmic and nuclear (PAB1).